The sequence spans 1083 residues: Alpha-mannosidase (1083 aa).

An N-acetylserine modification is found at serine 2. The Zn(2+) site is built by histidine 298, aspartate 300, aspartate 411, and histidine 626. Residue aspartate 411 is the Nucleophile of the active site.

The protein belongs to the glycosyl hydrolase 38 family. Composed of isoforms with three constituent polypeptides described as [(107 kDa)-n (73 kDa)-(6-n) (31 kDa)-(6-n)], where n is 0-6. The 73 kDa and the 31 kDa polypeptides may be proteolytic derivatives of the 107 kDa polypeptide in the vacuole. Oligomerizes in the cytoplasm and retains its oligomeric form during import into the vacuole. It depends on Zn(2+) as a cofactor. In terms of processing, the N-terminus is blocked.

Its subcellular location is the vacuole. It carries out the reaction Hydrolysis of terminal, non-reducing alpha-D-mannose residues in alpha-D-mannosides.. Its function is as follows. Degrades free oligosaccharides in the vacuole. The protein is Alpha-mannosidase (AMS1) of Saccharomyces cerevisiae (strain ATCC 204508 / S288c) (Baker's yeast).